We begin with the raw amino-acid sequence, 298 residues long: Methylsterol monooxygenase 1-1 (298 aa).

Helical transmembrane passes span 42-62, 96-116, and 118-138; these read ILFL…VELA, FILV…MIEI, and SGLP…YFLI. The region spanning 132-267 is the Fatty acid hydroxylase domain; the sequence is LVVYFLIEDY…FTYCDYIYGT (136 aa). A Histidine box-1 motif is present at residues 147 to 151; that stretch reads HRFFH. Residues 160 to 164 carry the Histidine box-2 motif; the sequence is HRVHH. Residues 189 to 209 traverse the membrane as a helical segment; the sequence is TFMGPAIAPGHMITFWLWIAL. The Histidine box-3 motif lies at 239–245; it reads YHDYHHY.

Belongs to the sterol desaturase family. In terms of assembly, interacts with ACBP1. Fe cation is required as a cofactor. Expressed in rosettes, stems, roots, floral buds, flowers and siliques.

It is found in the endoplasmic reticulum membrane. It carries out the reaction 4,4-dimethyl-5alpha-cholest-7-en-3beta-ol + 6 Fe(II)-[cytochrome b5] + 3 O2 + 5 H(+) = 4alpha-carboxy-4beta-methyl-5alpha-cholest-7-ene-3beta-ol + 6 Fe(III)-[cytochrome b5] + 4 H2O. It catalyses the reaction 24-methylenecycloartanol + 6 Fe(II)-[cytochrome b5] + 3 O2 + 5 H(+) = 4alpha-carboxy-4beta,14alpha-dimethyl-9beta,19-cyclo-5alpha-ergost-24(24(1))-en-3beta-ol + 6 Fe(III)-[cytochrome b5] + 4 H2O. In terms of biological role, non-heme iron oxygenase involved in sterols biosynthesis by catalyzing the removal of the first methyl group at the C-4 position. 4,4-dimethyl-9-beta,19-cyclopropylsterols such as 24-methylenecycloartanol are the preferred substrates. Acts as a rate-limiting enzyme in the sterol pathway via interaction with ACBP1; sterols serve as lipid modulators for gene expression of homeodomain-leucine zipper IV transcription factors. Together with SMO1-2, involved in the maintenance of sterol composition to balance auxin and cytokinin activities during embryogenesis. In Arabidopsis thaliana (Mouse-ear cress), this protein is Methylsterol monooxygenase 1-1.